Reading from the N-terminus, the 1363-residue chain is DNA-directed RNA polymerase subunit beta' (1363 aa).

Residues 1–39 form a disordered region; that stretch reads MTSTPSKSRKSSKGSKAAKAAASAPETRPLAKTPPPFRN. Residues 14 to 24 show a composition bias toward low complexity; sequence GSKAAKAAASA. Zn(2+) contacts are provided by cysteine 248, cysteine 315, cysteine 322, and cysteine 325.

Belongs to the RNA polymerase beta' chain family. RpoC2 subfamily. In terms of assembly, in cyanobacteria the RNAP catalytic core is composed of 2 alpha, 1 beta, 1 beta', 1 gamma and 1 omega subunit. When a sigma factor is associated with the core the holoenzyme is formed, which can initiate transcription. It depends on Zn(2+) as a cofactor.

The enzyme catalyses RNA(n) + a ribonucleoside 5'-triphosphate = RNA(n+1) + diphosphate. DNA-dependent RNA polymerase catalyzes the transcription of DNA into RNA using the four ribonucleoside triphosphates as substrates. The sequence is that of DNA-directed RNA polymerase subunit beta' from Synechococcus sp. (strain WH7803).